Consider the following 1132-residue polypeptide: Ubiquitin carboxyl-terminal hydrolase 43 (1132 aa).

The tract at residues 1-103 is disordered; it reads MDPGVGNALG…GARPPGAQGL (103 aa). Positions 17–28 are enriched in basic residues; it reads RPRRRRSLRRLL. Low complexity-rich tracts occupy residues 29-44 and 63-78; these read NRFLLALGSRSRSGDS and FACAPGPAPASAGSPG. Positions 101 to 710 constitute a USP domain; that stretch reads QGLKNHGNTC…GAYILFYQKR (610 aa). Catalysis depends on Cys-110, which acts as the Nucleophile. The active-site Proton acceptor is the His-668. Arg-746 carries the post-translational modification Asymmetric dimethylarginine. Disordered regions lie at residues 839-891, 935-1008, 1024-1044, and 1057-1106; these read RRRP…TGVP, TVMP…RGQG, RTVRTESSPPAPPISLGSDRL, and RESP…GEQI. Over residues 941 to 950 the composition is skewed to basic and acidic residues; it reads GDEKPARPEG. The segment covering 958-967 has biased composition (low complexity); sequence GSSQVGSQSS. Ser-970 carries the phosphoserine modification. The segment covering 994 to 1006 has biased composition (basic and acidic residues); it reads AAMEERAPDKDRG.

Belongs to the peptidase C19 family.

The catalysed reaction is Thiol-dependent hydrolysis of ester, thioester, amide, peptide and isopeptide bonds formed by the C-terminal Gly of ubiquitin (a 76-residue protein attached to proteins as an intracellular targeting signal).. In terms of biological role, may recognize and hydrolyze the peptide bond at the C-terminal Gly of ubiquitin. Involved in the processing of poly-ubiquitin precursors as well as that of ubiquitinated proteins. The chain is Ubiquitin carboxyl-terminal hydrolase 43 (Usp43) from Mus musculus (Mouse).